The sequence spans 206 residues: Small ribosomal subunit protein uS4 (206 aa).

An S4 RNA-binding domain is found at G96–K156.

It belongs to the universal ribosomal protein uS4 family. As to quaternary structure, part of the 30S ribosomal subunit. Contacts protein S5. The interaction surface between S4 and S5 is involved in control of translational fidelity.

One of the primary rRNA binding proteins, it binds directly to 16S rRNA where it nucleates assembly of the body of the 30S subunit. In terms of biological role, with S5 and S12 plays an important role in translational accuracy. This Serratia proteamaculans (strain 568) protein is Small ribosomal subunit protein uS4.